The primary structure comprises 130 residues: YopE regulator (130 aa).

In terms of biological role, positive regulator of YopE. This Yersinia enterocolitica serotype O:8 / biotype 1B (strain NCTC 13174 / 8081) protein is YopE regulator (yerA).